Consider the following 351-residue polypeptide: Translation initiation factor eIF2B subunit beta (351 aa).

It belongs to the eIF-2B alpha/beta/delta subunits family. Component of the translation initiation factor 2B (eIF2B) complex which is a heterodecamer of two sets of five different subunits: alpha, beta, gamma, delta and epsilon. Subunits alpha, beta and delta comprise a regulatory subcomplex and subunits epsilon and gamma comprise a catalytic subcomplex. Within the complex, the hexameric regulatory complex resides at the center, with the two heterodimeric catalytic subcomplexes bound on opposite sides.

Its subcellular location is the cytoplasm. The protein resides in the cytosol. With respect to regulation, activated by the chemical integrated stress response (ISR) inhibitor ISRIB which stimulates guanine nucleotide exchange factor activity for both phosphorylated and unphosphorylated eIF2. Acts as a component of the translation initiation factor 2B (eIF2B) complex, which catalyzes the exchange of GDP for GTP on eukaryotic initiation factor 2 (eIF2) gamma subunit. Its guanine nucleotide exchange factor activity is repressed when bound to eIF2 complex phosphorylated on the alpha subunit, thereby limiting the amount of methionyl-initiator methionine tRNA available to the ribosome and consequently global translation is repressed. This chain is Translation initiation factor eIF2B subunit beta (EIF2B2), found in Bos taurus (Bovine).